Consider the following 318-residue polypeptide: Inactive dihydropteroate synthase 2 (318 aa).

Residues 1–25 (MRSTPPASAGRSTPPALAGHSTPPA) form a disordered region. Residues 42 to 299 (ALIMAIVNRT…EVAATRRVLE (258 aa)) form the Pterin-binding domain.

The protein belongs to the DHPS family. In terms of assembly, homodimer.

In terms of biological role, has very low affinity for the DHPS substrate 6-hydroxymethyl-7,8-dihydropterin-pyrophosphate, but can bind the inhibitor dapsone. Seems to lack dihydropteroate synthase activity, and does probably not function in folate metabolism. The protein is Inactive dihydropteroate synthase 2 (folP2) of Mycobacterium bovis (strain ATCC BAA-935 / AF2122/97).